A 339-amino-acid chain; its full sequence is Ketol-acid reductoisomerase (NADP(+)) (339 aa).

Positions 1–182 constitute a KARI N-terminal Rossmann domain; the sequence is MRVYYDRDAD…GGGRSGIIET (182 aa). NADP(+) contacts are provided by residues 24–27, R48, S51, S53, and 83–86; these read YGSQ and DELQ. H108 is a catalytic residue. G134 lines the NADP(+) pocket. The KARI C-terminal knotted domain occupies 183-328; the sequence is TFREECETDL…EKLRGMMPWI (146 aa). The Mg(2+) site is built by D191, E195, E227, and E231. Residue S252 coordinates substrate.

This sequence belongs to the ketol-acid reductoisomerase family. Mg(2+) is required as a cofactor.

The enzyme catalyses (2R)-2,3-dihydroxy-3-methylbutanoate + NADP(+) = (2S)-2-acetolactate + NADPH + H(+). It catalyses the reaction (2R,3R)-2,3-dihydroxy-3-methylpentanoate + NADP(+) = (S)-2-ethyl-2-hydroxy-3-oxobutanoate + NADPH + H(+). The protein operates within amino-acid biosynthesis; L-isoleucine biosynthesis; L-isoleucine from 2-oxobutanoate: step 2/4. It functions in the pathway amino-acid biosynthesis; L-valine biosynthesis; L-valine from pyruvate: step 2/4. Functionally, involved in the biosynthesis of branched-chain amino acids (BCAA). Catalyzes an alkyl-migration followed by a ketol-acid reduction of (S)-2-acetolactate (S2AL) to yield (R)-2,3-dihydroxy-isovalerate. In the isomerase reaction, S2AL is rearranged via a Mg-dependent methyl migration to produce 3-hydroxy-3-methyl-2-ketobutyrate (HMKB). In the reductase reaction, this 2-ketoacid undergoes a metal-dependent reduction by NADPH to yield (R)-2,3-dihydroxy-isovalerate. This is Ketol-acid reductoisomerase (NADP(+)) from Magnetospirillum molischianum (Rhodospirillum molischianum).